The primary structure comprises 367 residues: Glutamate 5-kinase (367 aa).

Lys10 provides a ligand contact to ATP. 3 residues coordinate substrate: Ser50, Asp137, and Asn149. ATP-binding positions include 169–170 and 211–217; these read TD and TGGMSTK. Residues 275-353 enclose the PUA domain; that stretch reads AGEITVDEGA…QQIDAILGYE (79 aa).

The protein belongs to the glutamate 5-kinase family.

The protein localises to the cytoplasm. The catalysed reaction is L-glutamate + ATP = L-glutamyl 5-phosphate + ADP. The protein operates within amino-acid biosynthesis; L-proline biosynthesis; L-glutamate 5-semialdehyde from L-glutamate: step 1/2. Catalyzes the transfer of a phosphate group to glutamate to form L-glutamate 5-phosphate. This is Glutamate 5-kinase from Salmonella arizonae (strain ATCC BAA-731 / CDC346-86 / RSK2980).